A 578-amino-acid polypeptide reads, in one-letter code: Signal peptide peptidase-like 2B (578 aa).

Residues 1–19 (MAAARLAAALLLLAAQVAC) form the signal peptide. At 20 to 168 (EFGVLRVVSQ…APSEPVMDYN (149 aa)) the chain is on the lumenal side. The PA domain maps to 61 to 145 (LRDLSTTQLC…LLSHRDLQDI (85 aa)). 2 N-linked (GlcNAc...) asparagine glycosylation sites follow: Asn-91 and Asn-123. The helical transmembrane segment at 169 to 189 (MVIIFVMAVGTVAIGGYWAGS) threads the bilayer. Topologically, residues 190–216 (HDVKKYMKHKRDDGPEKQEDEAVDVTP) are cytoplasmic. A helical transmembrane segment spans residues 217–237 (VMICVFVVMCCFMLVLLYYFY). Topologically, residues 238 to 239 (DR) are lumenal. A helical transmembrane segment spans residues 240-260 (LVYVIIGIFCLASSTGLYSCL). Topologically, residues 261-286 (APFVRKLPFCTCRVPDNNLPYFHKRP) are cytoplasmic. A helical transmembrane segment spans residues 287–307 (QARMLLLALFCVTVSVVWGIF). Topologically, residues 308–312 (RNEDQ) are lumenal. The chain crosses the membrane as a helical span at residues 313 to 333 (WAWVLQDTLGIAFCLYMLKTI). The Cytoplasmic portion of the chain corresponds to 334-341 (RLPTFKAC). The chain crosses the membrane as a helical span at residues 342-362 (TLLLLVLFIYDIFFVFITPFL). Residue Asp-352 is part of the active site. Over 363–405 (TKSGNSIMVEVATGPSNSSTHEKLPMVLKVPRLNTSPLSLCDR) the chain is Lumenal. A helical transmembrane segment spans residues 406–426 (PFSLLGFGDILVPGLLVAYCH). Residue Asp-414 is part of the active site. Over 427 to 438 (RFDIQVQSSRIY) the chain is Cytoplasmic. A helical transmembrane segment spans residues 439-459 (FVACTIAYGLGLLVTFVALVL). At 460–463 (MQRG) the chain is on the lumenal side. A helical membrane pass occupies residues 464–484 (QPALLYLVPCTLLTSCTVALW). The short motif at 465 to 467 (PAL) is the PAL element. Over 485–578 (RRELGAFWTG…IPVVKPETSA (94 aa)) the chain is Cytoplasmic. The disordered stretch occupies residues 502-578 (PQTPWAATQG…IPVVKPETSA (77 aa)). Residues 520-529 (SSLSEQPPSE) are compositionally biased toward low complexity.

Belongs to the peptidase A22B family. In terms of assembly, monomer. Homodimer. Interacts with ITM2B and TNF. In terms of processing, glycosylated.

It is found in the cell membrane. The protein resides in the golgi apparatus membrane. Its subcellular location is the lysosome membrane. The protein localises to the endosome membrane. It localises to the membrane. Its function is as follows. Intramembrane-cleaving aspartic protease (I-CLiP) that cleaves type II membrane signal peptides in the hydrophobic plane of the membrane. Functions in ITM2B and TNF processing. Catalyzes the intramembrane cleavage of the anchored fragment of shed TNF-alpha (TNF), which promotes the release of the intracellular domain (ICD) for signaling to the nucleus. May play a role in the regulation of innate and adaptive immunity. In Mus musculus (Mouse), this protein is Signal peptide peptidase-like 2B.